The chain runs to 115 residues: MLDGKTIIVVAADQGLRRSVAFALEVEGYYTESYDSVQKSEASCREALCAIVDDDILRTEPQAAAQFLSNRGGRAILLVDGLSALQPPVDYATLTKPFTGADLLGVINSLVVAAK.

In terms of assembly, interacts directly with FixL.

In terms of biological role, prevents transcription of the intermediate key regulatory genes nifA and fixK by counteracting the activity of the FixLJ two-component system. Acts as an inhibitor of the sensor hemoprotein kinase fixL, preventing the production or the accumulation of its phosphorylated form. The sequence is that of Transcriptional regulator protein FixT (fixT) from Rhizobium meliloti (strain 1021) (Ensifer meliloti).